Consider the following 346-residue polypeptide: Growth hormone-inducible transmembrane protein (346 aa).

Residues 1–45 (MLAARLVCLRTLPSRVFQPTFITKASPLVKNSITKNQWLLTPSRE) constitute a mitochondrion transit peptide. Over 46–83 (YATKTRIRTHRGKTGQELKEAALEPSLEKVFKIDQMGK) the chain is Mitochondrial matrix. The helical transmembrane segment at 84 to 104 (WFVAGGAAVGLGALCYYGLGM) threads the bilayer. Topologically, residues 105–126 (SNEIGAIEKAVIWPQYVKDRIH) are mitochondrial intermembrane. A helical membrane pass occupies residues 127–147 (STYMYLAGSIGLTALSALALA). The Mitochondrial matrix segment spans residues 148 to 160 (RSPALMNFMMTGS). A helical transmembrane segment spans residues 161-181 (WMTIGATFAAMIGAGMLVQSI). The Mitochondrial intermembrane portion of the chain corresponds to 182–191 (SYEQSPGPKH). Residues 192 to 212 (LAWMLHSGVMGAVVAPLTILG) form a helical membrane-spanning segment. The Mitochondrial matrix portion of the chain corresponds to 213–214 (GP). The helical transmembrane segment at 215-235 (LLLRAAWYTAGIVGGLSTVAM) threads the bilayer. Residues 236-245 (CAPSEKFLNM) lie on the Mitochondrial intermembrane side of the membrane. Residues 246–266 (GAPLGVGLGLVFASSLGSMFL) form a helical membrane-spanning segment. Over 267–272 (PPTSVA) the chain is Mitochondrial matrix. A helical transmembrane segment spans residues 273–293 (GATLYSVAMYGGLVLFSMFLL). The Mitochondrial intermembrane segment spans residues 294 to 346 (YDTQKVVKRAEITPAYGAQKYDPINSMLTIYMDTLNIFMRVATMLATGSNRKK).

The protein belongs to the BI1 family. As to quaternary structure, interacts with LETM1 and AFG3L2. Post-translationally, undergoes AFG3L2-mediated proteolytic degradation, upon hyperpolarization of mitochondria.

It localises to the mitochondrion inner membrane. In terms of biological role, plays an important role in maintenance of mitochondrial morphology and in mediating either calcium or potassium/proton antiport. Mediates proton-dependent calcium efflux from mitochondrion. Also functions as an electroneutral mitochondrial proton/potassium exchanger. Required for the mitochondrial tubular network and cristae organization. Involved in apoptotic release of cytochrome c. Inhibits AFG3L2 proteolytic activity, stimulating respiration and stabilizing respiratory enzymes in actively respiring mitochondria. However, when mitochondria become hyperpolarized, GHITM loses its inhibitory activity toward AFG3L2 and the now active AFG3L2 turns first on GHITM and, if hyperpolarization persists, on other proteins of the mitochondria, leading to a broad remodeling of the proteome. This chain is Growth hormone-inducible transmembrane protein (Ghitm), found in Rattus norvegicus (Rat).